The following is a 408-amino-acid chain: Cytochrome bc1 complex Rieske iron-sulfur subunit (408 aa).

The next 3 membrane-spanning stretches (helical) occupy residues 56-76 (VTFW…TYIF), 98-118 (MLGI…VLYV), and 162-182 (LIMG…IAPM). Residues 293-390 (HGPRNAVMLI…ITVDEEGYLI (98 aa)) enclose the Rieske domain. Positions 333, 335, 352, and 355 each coordinate [2Fe-2S] cluster. An intrachain disulfide couples Cys-338 to Cys-354.

Belongs to the Rieske iron-sulfur protein family. The cytochrome bc1 complex is composed of a cytochrome b (QcrB), the Rieske iron-sulfur protein (QcrA) and a diheme cytochrome c (QcrC) subunit. The bc1 complex forms a supercomplex with cytochrome c oxidase (cytochrome aa3). [2Fe-2S] cluster serves as cofactor.

It localises to the cell membrane. Its function is as follows. Iron-sulfur subunit of the cytochrome bc1 complex, an essential component of the respiratory electron transport chain required for ATP synthesis. The bc1 complex catalyzes the oxidation of menaquinol and the reduction of cytochrome c in the respiratory chain. The bc1 complex operates through a Q-cycle mechanism that couples electron transfer to generation of the proton gradient that drives ATP synthesis. This is Cytochrome bc1 complex Rieske iron-sulfur subunit (qcrA) from Corynebacterium glutamicum (strain ATCC 13032 / DSM 20300 / JCM 1318 / BCRC 11384 / CCUG 27702 / LMG 3730 / NBRC 12168 / NCIMB 10025 / NRRL B-2784 / 534).